Here is a 144-residue protein sequence, read N- to C-terminus: Large-conductance mechanosensitive channel (144 aa).

Helical transmembrane passes span 16 to 36 (VIDLAVGVIIGAAFGKIVDSV) and 86 to 106 (GNFLTIVVNFVILAFIIFLMV).

It belongs to the MscL family. As to quaternary structure, homopentamer.

The protein resides in the cell inner membrane. Functionally, channel that opens in response to stretch forces in the membrane lipid bilayer. May participate in the regulation of osmotic pressure changes within the cell. The polypeptide is Large-conductance mechanosensitive channel (Cupriavidus pinatubonensis (strain JMP 134 / LMG 1197) (Cupriavidus necator (strain JMP 134))).